We begin with the raw amino-acid sequence, 67 residues long: Large ribosomal subunit protein bL31 (67 aa).

Cysteine 16, cysteine 18, cysteine 36, and cysteine 39 together coordinate Zn(2+).

The protein belongs to the bacterial ribosomal protein bL31 family. Type A subfamily. In terms of assembly, part of the 50S ribosomal subunit. It depends on Zn(2+) as a cofactor.

Binds the 23S rRNA. This chain is Large ribosomal subunit protein bL31, found in Desulforudis audaxviator (strain MP104C).